The following is a 185-amino-acid chain: Pyridoxal 5'-phosphate synthase subunit PdxT (185 aa).

An L-glutamine-binding site is contributed by 46 to 48 (GES). Cys-75 acts as the Nucleophile in catalysis. Residues Arg-101 and 129–130 (IR) contribute to the L-glutamine site. Active-site charge relay system residues include His-165 and Glu-167.

It belongs to the glutaminase PdxT/SNO family. In terms of assembly, in the presence of PdxS, forms a dodecamer of heterodimers. Only shows activity in the heterodimer.

The enzyme catalyses aldehydo-D-ribose 5-phosphate + D-glyceraldehyde 3-phosphate + L-glutamine = pyridoxal 5'-phosphate + L-glutamate + phosphate + 3 H2O + H(+). It catalyses the reaction L-glutamine + H2O = L-glutamate + NH4(+). The protein operates within cofactor biosynthesis; pyridoxal 5'-phosphate biosynthesis. Catalyzes the hydrolysis of glutamine to glutamate and ammonia as part of the biosynthesis of pyridoxal 5'-phosphate. The resulting ammonia molecule is channeled to the active site of PdxS. In Staphylococcus epidermidis (strain ATCC 12228 / FDA PCI 1200), this protein is Pyridoxal 5'-phosphate synthase subunit PdxT.